Here is a 613-residue protein sequence, read N- to C-terminus: Serine/threonine-protein kinase pkpA (613 aa).

The 253-residue stretch at 17 to 269 (SKLNTVLGKG…AQEILEHRFL (253 aa)) folds into the Protein kinase domain. Residues 23-31 (LGKGAYKVV) and K50 contribute to the ATP site. D140 functions as the Proton acceptor in the catalytic mechanism. Disordered regions lie at residues 424 to 475 (LQPQ…STML) and 589 to 613 (VTQR…QELM). Over residues 427–441 (QPQPQPQPQPQPQPQ) the composition is skewed to pro residues. Low complexity predominate over residues 442-475 (PQFQLQPQLQYLSPQSTTSPGPTSDDNSTNSTML). Residues 592 to 602 (RGLQGTRSGAS) are compositionally biased toward polar residues.

It belongs to the protein kinase superfamily. Ser/Thr protein kinase family.

The catalysed reaction is L-seryl-[protein] + ATP = O-phospho-L-seryl-[protein] + ADP + H(+). It catalyses the reaction L-threonyl-[protein] + ATP = O-phospho-L-threonyl-[protein] + ADP + H(+). Serine/threonine protein kinase that probably participates as an intermediate in an intracellular system controlling nuclear proliferation. The polypeptide is Serine/threonine-protein kinase pkpA (pkpA) (Phycomyces blakesleeanus (strain ATCC 8743b / DSM 1359 / FGSC 10004 / NBRC 33097 / NRRL 1555)).